The chain runs to 259 residues: Deoxyribose-phosphate aldolase (259 aa).

Asp-102 (proton donor/acceptor) is an active-site residue. Catalysis depends on Lys-167, which acts as the Schiff-base intermediate with acetaldehyde. Catalysis depends on Lys-201, which acts as the Proton donor/acceptor.

Belongs to the DeoC/FbaB aldolase family. DeoC type 2 subfamily.

It is found in the cytoplasm. The catalysed reaction is 2-deoxy-D-ribose 5-phosphate = D-glyceraldehyde 3-phosphate + acetaldehyde. It functions in the pathway carbohydrate degradation; 2-deoxy-D-ribose 1-phosphate degradation; D-glyceraldehyde 3-phosphate and acetaldehyde from 2-deoxy-alpha-D-ribose 1-phosphate: step 2/2. Catalyzes a reversible aldol reaction between acetaldehyde and D-glyceraldehyde 3-phosphate to generate 2-deoxy-D-ribose 5-phosphate. The chain is Deoxyribose-phosphate aldolase from Edwardsiella ictaluri (strain 93-146).